A 195-amino-acid chain; its full sequence is Imidazoleglycerol-phosphate dehydratase (195 aa).

This sequence belongs to the imidazoleglycerol-phosphate dehydratase family.

It is found in the cytoplasm. The enzyme catalyses D-erythro-1-(imidazol-4-yl)glycerol 3-phosphate = 3-(imidazol-4-yl)-2-oxopropyl phosphate + H2O. Its pathway is amino-acid biosynthesis; L-histidine biosynthesis; L-histidine from 5-phospho-alpha-D-ribose 1-diphosphate: step 6/9. This chain is Imidazoleglycerol-phosphate dehydratase, found in Paracoccus denitrificans (strain Pd 1222).